The chain runs to 264 residues: DNA repair protein RecO (264 aa).

It belongs to the RecO family.

Its function is as follows. Involved in DNA repair and RecF pathway recombination. This chain is DNA repair protein RecO, found in Chlorobium luteolum (strain DSM 273 / BCRC 81028 / 2530) (Pelodictyon luteolum).